The sequence spans 297 residues: 3-methyl-2-oxobutanoate hydroxymethyltransferase (297 aa).

Positions M1–G15 are enriched in polar residues. The tract at residues M1–H40 is disordered. Residues A16–P33 are compositionally biased toward low complexity. Mg(2+) contacts are provided by D78 and D117. Residues D78–S79, D117, and K147 each bind 3-methyl-2-oxobutanoate. E149 provides a ligand contact to Mg(2+). Residue E215 is the Proton acceptor of the active site.

It belongs to the PanB family. In terms of assembly, homodecamer; pentamer of dimers. Mg(2+) serves as cofactor.

Its subcellular location is the cytoplasm. It catalyses the reaction 3-methyl-2-oxobutanoate + (6R)-5,10-methylene-5,6,7,8-tetrahydrofolate + H2O = 2-dehydropantoate + (6S)-5,6,7,8-tetrahydrofolate. It participates in cofactor biosynthesis; (R)-pantothenate biosynthesis; (R)-pantoate from 3-methyl-2-oxobutanoate: step 1/2. In terms of biological role, catalyzes the reversible reaction in which hydroxymethyl group from 5,10-methylenetetrahydrofolate is transferred onto alpha-ketoisovalerate to form ketopantoate. This chain is 3-methyl-2-oxobutanoate hydroxymethyltransferase, found in Mycobacterium marinum (strain ATCC BAA-535 / M).